We begin with the raw amino-acid sequence, 464 residues long: Agamous-like MADS-box protein AGL92 (464 aa).

In terms of domain architecture, MADS-box spans 1–60; that stretch reads MRTKTKLVLIPDRHFRRATFRKRNAGIRKKLHELTTLCDIKACAVIYSPFENPTVWPSTE. A coiled-coil region spans residues 85 to 114; that stretch reads ETFLRDQITKEQNKLESLRRENRETQLKHF. The segment at 443 to 464 is disordered; that stretch reads TSTGHMPSTTTTTTNNNNNNNV. Positions 451-464 are enriched in low complexity; that stretch reads TTTTTTNNNNNNNV.

As to quaternary structure, interacts with AGL62.

The protein resides in the nucleus. Putative transcription factor. This is Agamous-like MADS-box protein AGL92 (AGL92) from Arabidopsis thaliana (Mouse-ear cress).